The primary structure comprises 93 residues: UPF0358 protein lin1058 (93 aa).

The protein belongs to the UPF0358 family.

The sequence is that of UPF0358 protein lin1058 from Listeria innocua serovar 6a (strain ATCC BAA-680 / CLIP 11262).